The sequence spans 512 residues: ATP synthase subunit alpha (512 aa).

169-176 (GDRQTGKT) serves as a coordination point for ATP.

It belongs to the ATPase alpha/beta chains family. In terms of assembly, F-type ATPases have 2 components, CF(1) - the catalytic core - and CF(0) - the membrane proton channel. CF(1) has five subunits: alpha(3), beta(3), gamma(1), delta(1), epsilon(1). CF(0) has four main subunits: a(1), b(1), b'(1) and c(9-12).

The protein localises to the cell inner membrane. The enzyme catalyses ATP + H2O + 4 H(+)(in) = ADP + phosphate + 5 H(+)(out). Produces ATP from ADP in the presence of a proton gradient across the membrane. The alpha chain is a regulatory subunit. The sequence is that of ATP synthase subunit alpha from Roseobacter denitrificans (strain ATCC 33942 / OCh 114) (Erythrobacter sp. (strain OCh 114)).